Reading from the N-terminus, the 299-residue chain is Phosphoribosylaminoimidazole-succinocarboxamide synthase (299 aa).

This sequence belongs to the SAICAR synthetase family.

It catalyses the reaction 5-amino-1-(5-phospho-D-ribosyl)imidazole-4-carboxylate + L-aspartate + ATP = (2S)-2-[5-amino-1-(5-phospho-beta-D-ribosyl)imidazole-4-carboxamido]succinate + ADP + phosphate + 2 H(+). The protein operates within purine metabolism; IMP biosynthesis via de novo pathway; 5-amino-1-(5-phospho-D-ribosyl)imidazole-4-carboxamide from 5-amino-1-(5-phospho-D-ribosyl)imidazole-4-carboxylate: step 1/2. In Maridesulfovibrio salexigens (strain ATCC 14822 / DSM 2638 / NCIMB 8403 / VKM B-1763) (Desulfovibrio salexigens), this protein is Phosphoribosylaminoimidazole-succinocarboxamide synthase.